The following is a 512-amino-acid chain: Glutathione-binding protein GsiB (512 aa).

Residues 1–26 (MARAVHRSGLVALGIATALMASCAFA) form the signal peptide.

It belongs to the bacterial solute-binding protein 5 family. In terms of assembly, the complex is composed of two ATP-binding proteins (GsiA), two transmembrane proteins (GsiC and GsiD) and a solute-binding protein (GsiB).

It localises to the periplasm. In terms of biological role, part of the ABC transporter complex GsiABCD involved in glutathione import. Binds glutathione. This is Glutathione-binding protein GsiB from Shigella boydii serotype 4 (strain Sb227).